The sequence spans 103 residues: MYAVIQSGGKQHRVVEGETLKVELLKAETGSTITFDDVLMVVSGESVQIGAPVVAGAKVTAEVVGHGRHDKIRIIKMRRRKHYRKQQGHRQWFTELKITGISG.

The protein belongs to the bacterial ribosomal protein bL21 family. Part of the 50S ribosomal subunit. Contacts protein L20.

Functionally, this protein binds to 23S rRNA in the presence of protein L20. The chain is Large ribosomal subunit protein bL21 from Acinetobacter baylyi (strain ATCC 33305 / BD413 / ADP1).